A 2242-amino-acid chain; its full sequence is Transcription factor sma-9 (2242 aa).

Residues 120–383 are a coiled coil; sequence HQLAQQQAQQ…QQAQQAQLAQ (264 aa). The segment covering 317–330 has biased composition (low complexity); that stretch reads AAQQAQAQNNASQQ. 5 disordered regions span residues 317 to 344, 494 to 553, 583 to 617, 712 to 754, and 1323 to 1349; these read AAQQAQAQNNASQQRPSVASTPALSSTP, TPVA…SMSD, GAQSSVDHDSNSGGSTRTSPGPKDSRMLQAASRSQ, LAAH…SSFP, and EDSTSAEPSTSGQSLLMRSPRPQSPPL. Residues 331–344 show a composition bias toward polar residues; sequence RPSVASTPALSSTP. Low complexity-rich tracts occupy residues 494–523 and 539–550; these read TPVAVPPMKQNSNPSMNPSSTSTSASATSS and SSSKAASSGNES. The span at 583–601 shows a compositional bias: polar residues; sequence GAQSSVDHDSNSGGSTRTS. Over residues 1324–1338 the composition is skewed to polar residues; that stretch reads DSTSAEPSTSGQSLL. 5 C2H2-type zinc fingers span residues 1447–1469, 1475–1499, 1700–1722, 1734–1760, and 1790–1814; these read YICDRCGIRCKKPSMLKKHIKSH, FNCTACNFSFKTKGNLTKHLSSKTH, LKCDQCDRTFRKISDLTLHQHTH, YQCSECKIPIRTKAQLQKHLERNHGVH, and FMCVDCDIGFRKHGILAKHLRSKTH. Residues 2029 to 2039 are compositionally biased toward low complexity; it reads SITSPIVSSST. Disordered stretches follow at residues 2029-2059 and 2085-2107; these read SITSPIVSSSTNFSYRKRSESSLSGSSPTHT and STDKAHASESLSDRLHNKRPRPI. Basic and acidic residues predominate over residues 2085–2099; the sequence is STDKAHASESLSDRL. C2H2-type zinc fingers lie at residues 2111-2134 and 2143-2167; these read TKCQICADEFSTPIELQVHLHVDH and YKCPRKFCGLNYESLDSLRAHVTAH. The segment at 2219-2242 is disordered; that stretch reads HELYAQTQQGAGSSTSNQSPKAAN. The span at 2223-2242 shows a compositional bias: polar residues; it reads AQTQQGAGSSTSNQSPKAAN.

Expressed in the ventral nerve cord (VNC), pharynx, intestine and seam cells (at protein level).

It localises to the nucleus. Its function is as follows. Transcription factor, probably acting as a transcriptional activator and repressor, involved in the TGF-beta-like dbl-1 signaling pathway. Plays a role in regulation of body size, and patterning of male-specific genital sensilla (simple sense organs), known as rays, and mating-associated structures, spicules. Required for the dorsoventral patterning of the postembryonic mesodermal lineage (M lineage), acting by antagonizing the TGF-beta-like dbl-1 signaling pathway, in part by repressing expression of transcription factor unc-130. Involved in egg-laying, perhaps via modulation of cholinergic neurotransmission. Involved in production of reactive oxygen species (ROS), acting downstream of the dbl-1 signaling pathway. Plays a role in the mitochondrial unfolded protein response (mtUPR). May play a role in modulating lifespan and in responses to proteotoxic stress. Functionally, transcription factor, probably acting as a transcriptional activator. Required for patterning of male-specific genital sensilla (simple sense organs), known as rays. Dispensable for regulation of body size. This Caenorhabditis elegans protein is Transcription factor sma-9.